The following is a 130-amino-acid chain: Small ribosomal subunit protein uS9 (130 aa).

Belongs to the universal ribosomal protein uS9 family.

The sequence is that of Small ribosomal subunit protein uS9 from Pectobacterium carotovorum subsp. carotovorum (strain PC1).